The following is a 225-amino-acid chain: NAD(P)H-quinone oxidoreductase subunit K, chloroplastic (225 aa).

Residues Cys43, Cys44, Cys108, and Cys139 each contribute to the [4Fe-4S] cluster site.

The protein belongs to the complex I 20 kDa subunit family. In terms of assembly, NDH is composed of at least 16 different subunits, 5 of which are encoded in the nucleus. The cofactor is [4Fe-4S] cluster.

It is found in the plastid. The protein resides in the chloroplast thylakoid membrane. It carries out the reaction a plastoquinone + NADH + (n+1) H(+)(in) = a plastoquinol + NAD(+) + n H(+)(out). The catalysed reaction is a plastoquinone + NADPH + (n+1) H(+)(in) = a plastoquinol + NADP(+) + n H(+)(out). Its function is as follows. NDH shuttles electrons from NAD(P)H:plastoquinone, via FMN and iron-sulfur (Fe-S) centers, to quinones in the photosynthetic chain and possibly in a chloroplast respiratory chain. The immediate electron acceptor for the enzyme in this species is believed to be plastoquinone. Couples the redox reaction to proton translocation, and thus conserves the redox energy in a proton gradient. The protein is NAD(P)H-quinone oxidoreductase subunit K, chloroplastic of Capsella bursa-pastoris (Shepherd's purse).